Reading from the N-terminus, the 559-residue chain is DDB1- and CUL4-associated factor 10 (559 aa).

The tract at residues 1–119 (MFPFGPHSPG…HGLGAGLGGP (119 aa)) is disordered. Residues Ser-53, Ser-63, Ser-89, and Ser-92 each carry the phosphoserine modification. Residues 56–86 (RPGAPSLSPAPRSGELGLPGAPESSTASAPG) show a composition bias toward low complexity. Residues 87–97 (EPSPPSPPCRR) are compositionally biased toward pro residues. Arg-134 carries the omega-N-methylarginine modification. WD repeat units follow at residues 166-205 (RTHG…HIKT), 209-247 (AHED…TKVC), 251-290 (GHTS…EDGC), and 296-335 (FHTR…KSLE). Residue Ser-349 is modified to Phosphoserine. Positions 350–367 (SSDLTTSSSSSGPRVSGS) are enriched in low complexity. Residues 350-396 (SSDLTTSSSSSGPRVSGSPCHHSDSNSSEKHMSRASQREGVSPRNSL) form a disordered region. Over residues 370 to 381 (HHSDSNSSEKHM) the composition is skewed to basic and acidic residues. WD repeat units lie at residues 408–448 (DHGN…QEGA), 470–508 (VGRG…SELV), and 526–559 (SHND…QPKF).

This sequence belongs to the WD repeat DCAF10 family. In terms of assembly, interacts with DDB1.

It functions in the pathway protein modification; protein ubiquitination. Functionally, may function as a substrate receptor for CUL4-DDB1 E3 ubiquitin-protein ligase complex. The sequence is that of DDB1- and CUL4-associated factor 10 (DCAF10) from Homo sapiens (Human).